Reading from the N-terminus, the 664-residue chain is Pentatricopeptide repeat-containing protein At1g10910, chloroplastic (664 aa).

The N-terminal 72 residues, 1 to 72, are a transit peptide targeting the chloroplast; sequence METPLLVGLE…KRHSNSYLAR (72 aa). PPR repeat units follow at residues 165–199, 200–235, 236–270, 271–305, 306–340, 341–375, 376–406, 411–445, and 446–480; these read NVYICNSILSCLVKNGKLDSCIKLFDQMKRDGLKP, DVVTYNTLLAGCIKVKNGYPKAIELIGELPHNGIQM, DSVMYGTVLAICASNGRSEEAENFIQQMKVEGHSP, NIYHYSSLLNSYSWKGDYKKADELMTEMKSIGLVP, NKVMMTTLLKVYIKGGLFDRSRELLSELESAGYAE, NEMPYCMLMDGLSKAGKLEEARSIFDDMKGKGVRS, DGYANSIMISALCRSKRFKEAKELSRDSETT, DLVMLNTMLCAYCRAGEMESVMRMMKKMDEQAVSP, and DYNTFHILIKYFIKEKLHLLAYQTTLDMHSKGHRL.

Belongs to the PPR family. P subfamily.

It is found in the plastid. Its subcellular location is the chloroplast. The sequence is that of Pentatricopeptide repeat-containing protein At1g10910, chloroplastic from Arabidopsis thaliana (Mouse-ear cress).